The sequence spans 186 residues: Probable RNA 2'-phosphotransferase (186 aa).

The protein belongs to the KptA/TPT1 family.

In terms of biological role, removes the 2'-phosphate from RNA via an intermediate in which the phosphate is ADP-ribosylated by NAD followed by a presumed transesterification to release the RNA and generate ADP-ribose 1''-2''-cyclic phosphate (APPR&gt;P). May function as an ADP-ribosylase. The chain is Probable RNA 2'-phosphotransferase from Pectobacterium carotovorum subsp. carotovorum (strain PC1).